The sequence spans 286 residues: uncharacterized protein (286 aa).

The NADP(+) site is built by Ile-54, Asn-128, and Lys-162. Ser-178 (proton donor) is an active-site residue. NADP(+) is bound by residues Tyr-192, Lys-196, Ile-225, and Thr-227. Tyr-192 acts as the Proton acceptor in catalysis. The active-site Lowers pKa of active site Tyr is Lys-196.

This sequence belongs to the short-chain dehydrogenases/reductases (SDR) family.

This is an uncharacterized protein from Schizosaccharomyces pombe (strain 972 / ATCC 24843) (Fission yeast).